The sequence spans 260 residues: uncharacterized protein (260 aa).

Positions 1-22 (MGYSKRFALYISILILIVMVAG) are cleaved as a signal peptide. A lipid anchor (N-palmitoyl cysteine) is attached at C23. C23 carries S-diacylglycerol cysteine lipidation.

It belongs to the staphylococcal tandem lipoprotein family.

It is found in the cell membrane. This is an uncharacterized protein from Staphylococcus aureus (strain N315).